A 127-amino-acid polypeptide reads, in one-letter code: Trefoil factor 2 (127 aa).

Positions 1–21 (EPQRPAPGHPPPAGAVCLTGA) are cleaved as a signal peptide. The residue at position 22 (Gln22) is a Pyrrolidone carboxylic acid. P-type domains follow at residues 27-71 (CRCS…FKPL) and 77-120 (EECV…FFPM). Disulfide bonds link Cys27–Cys125, Cys29–Cys56, Cys40–Cys55, Cys50–Cys67, Cys79–Cys105, Cys89–Cys104, and Cys99–Cys116.

Found in pancreas.

Its subcellular location is the secreted. Its function is as follows. Inhibits gastrointestinal motility and gastric acid secretion. Could function as a structural component of gastric mucus, possibly by stabilizing glycoproteins in the mucus gel through interactions with carbohydrate side chains. This chain is Trefoil factor 2 (TFF2), found in Sus scrofa (Pig).